The sequence spans 235 residues: Type III pantothenate kinase (235 aa).

Residue 6–13 participates in ATP binding; the sequence is DVGNTSLK. Substrate-binding positions include Y79 and 86-89; that span reads GIDR. The active-site Proton acceptor is D88. K(+) is bound at residue D109. T112 lines the ATP pocket. A substrate-binding site is contributed by T164.

The protein belongs to the type III pantothenate kinase family. Homodimer. The cofactor is NH4(+). Requires K(+) as cofactor.

The protein resides in the cytoplasm. The enzyme catalyses (R)-pantothenate + ATP = (R)-4'-phosphopantothenate + ADP + H(+). Its pathway is cofactor biosynthesis; coenzyme A biosynthesis; CoA from (R)-pantothenate: step 1/5. In terms of biological role, catalyzes the phosphorylation of pantothenate (Pan), the first step in CoA biosynthesis. This chain is Type III pantothenate kinase, found in Pseudoalteromonas translucida (strain TAC 125).